We begin with the raw amino-acid sequence, 386 residues long: Succinate--CoA ligase [ADP-forming] subunit beta (386 aa).

An ATP-grasp domain is found at 9 to 244 (KDLLTAYQLP…PSQENIRDVL (236 aa)). ATP is bound by residues K46, 53-55 (GRG), V102, and E107. Residues N199 and D213 each contribute to the Mg(2+) site. Substrate-binding positions include N264 and 321-323 (GIM).

It belongs to the succinate/malate CoA ligase beta subunit family. In terms of assembly, heterotetramer of two alpha and two beta subunits. The cofactor is Mg(2+).

The enzyme catalyses succinate + ATP + CoA = succinyl-CoA + ADP + phosphate. It carries out the reaction GTP + succinate + CoA = succinyl-CoA + GDP + phosphate. Its pathway is carbohydrate metabolism; tricarboxylic acid cycle; succinate from succinyl-CoA (ligase route): step 1/1. Succinyl-CoA synthetase functions in the citric acid cycle (TCA), coupling the hydrolysis of succinyl-CoA to the synthesis of either ATP or GTP and thus represents the only step of substrate-level phosphorylation in the TCA. The beta subunit provides nucleotide specificity of the enzyme and binds the substrate succinate, while the binding sites for coenzyme A and phosphate are found in the alpha subunit. This is Succinate--CoA ligase [ADP-forming] subunit beta from Chlamydia trachomatis serovar L2 (strain ATCC VR-902B / DSM 19102 / 434/Bu).